A 100-amino-acid polypeptide reads, in one-letter code: Aspartyl/glutamyl-tRNA(Asn/Gln) amidotransferase subunit C (100 aa).

Belongs to the GatC family. As to quaternary structure, heterotrimer of A, B and C subunits.

It catalyses the reaction L-glutamyl-tRNA(Gln) + L-glutamine + ATP + H2O = L-glutaminyl-tRNA(Gln) + L-glutamate + ADP + phosphate + H(+). The enzyme catalyses L-aspartyl-tRNA(Asn) + L-glutamine + ATP + H2O = L-asparaginyl-tRNA(Asn) + L-glutamate + ADP + phosphate + 2 H(+). Allows the formation of correctly charged Asn-tRNA(Asn) or Gln-tRNA(Gln) through the transamidation of misacylated Asp-tRNA(Asn) or Glu-tRNA(Gln) in organisms which lack either or both of asparaginyl-tRNA or glutaminyl-tRNA synthetases. The reaction takes place in the presence of glutamine and ATP through an activated phospho-Asp-tRNA(Asn) or phospho-Glu-tRNA(Gln). This chain is Aspartyl/glutamyl-tRNA(Asn/Gln) amidotransferase subunit C, found in Streptococcus thermophilus (strain ATCC BAA-491 / LMD-9).